We begin with the raw amino-acid sequence, 175 residues long: NAD(P)H-quinone oxidoreductase subunit J (175 aa).

It belongs to the complex I 30 kDa subunit family. As to quaternary structure, NDH-1 can be composed of about 15 different subunits; different subcomplexes with different compositions have been identified which probably have different functions.

The protein localises to the cellular thylakoid membrane. It carries out the reaction a plastoquinone + NADH + (n+1) H(+)(in) = a plastoquinol + NAD(+) + n H(+)(out). The enzyme catalyses a plastoquinone + NADPH + (n+1) H(+)(in) = a plastoquinol + NADP(+) + n H(+)(out). Its function is as follows. NDH-1 shuttles electrons from an unknown electron donor, via FMN and iron-sulfur (Fe-S) centers, to quinones in the respiratory and/or the photosynthetic chain. The immediate electron acceptor for the enzyme in this species is believed to be plastoquinone. Couples the redox reaction to proton translocation, and thus conserves the redox energy in a proton gradient. Cyanobacterial NDH-1 also plays a role in inorganic carbon-concentration. This is NAD(P)H-quinone oxidoreductase subunit J from Nostoc sp. (strain PCC 7120 / SAG 25.82 / UTEX 2576).